Reading from the N-terminus, the 411-residue chain is Prophage integrase IntR (411 aa).

Residues 81–176 (KTFGELCDIW…LLCSLLRFAY (96 aa)) enclose the Core-binding (CB) domain. The 208-residue stretch at 197–404 (IKPDPLSKTE…IDDMNDEQIA (208 aa)) folds into the Tyr recombinase domain. Active-site residues include arginine 231, lysine 266, arginine 358, and histidine 381. Tyrosine 391 (O-(3'-phospho-DNA)-tyrosine intermediate) is an active-site residue.

The protein belongs to the 'phage' integrase family.

Integrase is necessary for integration of the phage into the host genome by site-specific recombination. In conjunction with excisionase, integrase is also necessary for excision of the prophage from the host genome. This is Prophage integrase IntR (intR) from Escherichia coli (strain K12).